A 988-amino-acid chain; its full sequence is Exportin-T (988 aa).

Belongs to the exportin family.

The protein resides in the nucleus. Its subcellular location is the cytoplasm. Its function is as follows. tRNA nucleus export receptor which facilitates tRNA translocation across the nuclear pore complex. Involved in pre-tRNA splicing, probably by affecting the interaction of pre-tRNA with splicing endonuclease. In Lodderomyces elongisporus (strain ATCC 11503 / CBS 2605 / JCM 1781 / NBRC 1676 / NRRL YB-4239) (Yeast), this protein is Exportin-T (LOS1).